Consider the following 140-residue polypeptide: Large ribosomal subunit protein uL16 (140 aa).

Residues 1 to 16 (MLMPKRVKHRKQMKGR) show a composition bias toward basic residues. Residues 1-20 (MLMPKRVKHRKQMKGRMKGD) are disordered.

The protein belongs to the universal ribosomal protein uL16 family. As to quaternary structure, part of the 50S ribosomal subunit.

In terms of biological role, binds 23S rRNA and is also seen to make contacts with the A and possibly P site tRNAs. The sequence is that of Large ribosomal subunit protein uL16 from Geobacter sulfurreducens (strain ATCC 51573 / DSM 12127 / PCA).